Consider the following 647-residue polypeptide: MRLTLLCCTWREERMGEEGSELPVCASCGQRIYDGQYLQALNADWHADCFRCCECSVSLSHQYYEKDGQLFCKKDYWARYGESCHGCSEHITKGLVMVAGELKYHPECFICLACGNFIGDGDTYTLVEHSKLYCGQCYYQTVVTPVIEQILPDSPGSHLPHTVTLVSIPASAHGKRGLSVSIDPPHGPPGCGTEHSHTVRVQGVDPGCMSPDVKNSIHVGDRILEINGTPIRNVPLDEIDLLIQETSRLLQLTLEHDPHDSLGHGPVSDPSPLSSPVHTPSGQAASSARQKPVLRSCSIDTSPGTSSLASPASQRKDLGRSESLRVVCRPHRIFRPSDLIHGEVLGKGCFGQAIKVTHRETGEVMVMKELIRFDEETQRTFLKEVKVMRCLEHPNVLKFIGVLYKDKRLNFITEYIKGGTLRGIIKNMDSQYPWSQRVSFAKDIASGMAYLHSMNIIHRDLNSHNCLVRENRNVVVADFGLARLMIDEKNQSEDLRSLKKPDRKKRYTVVGNPYWMAPEMINGRSYDEKVDVFSFGIVLCEIIGRVNADPDYLPRTMDFGLNVRGFLDRYCPPNCPPSFFPITVRCCDLDPEKRPSFVKLEQWLETLRMHLSGHLPLGPQLEQLERGFWETYRRGESSLPAHPEVPD.

LIM zinc-binding domains are found at residues 25 to 75 and 84 to 137; these read CASC…CKKD and CHGC…CGQC. The region spanning 165–258 is the PDZ domain; that stretch reads LVSIPASAHG…LLQLTLEHDP (94 aa). Ser-210 is subject to Phosphoserine. Residue Thr-229 is modified to Phosphothreonine. The interval 256 to 319 is disordered; sequence HDPHDSLGHG…SPASQRKDLG (64 aa). A compositionally biased stretch (low complexity) spans 266–277; the sequence is PVSDPSPLSSPV. Composition is skewed to polar residues over residues 278 to 289 and 298 to 313; these read HTPSGQAASSAR and SIDT…SPAS. Phosphoserine occurs at positions 298, 302, 307, and 310. Ser-323 is subject to Phosphoserine; by MAPKAPK2. A Phosphoserine modification is found at Ser-337. The 266-residue stretch at 339–604 folds into the Protein kinase domain; that stretch reads LIHGEVLGKG…PSFVKLEQWL (266 aa). ATP contacts are provided by residues 345–353 and Lys-368; that span reads LGKGCFGQA. The active site involves Asp-460. Position 508 is a phosphothreonine; by ROCK1 (Thr-508).

It belongs to the protein kinase superfamily. TKL Ser/Thr protein kinase family. In terms of assembly, self-associates to form homodimers. Interacts with HSP90AA1; this interaction promotes LIMK1 dimerization and subsequent transphosphorylation. Interacts with CDKN1C. Interacts (via LIM domain) with the cytoplasmic domain of NRG1. Interacts with NISCH. Interacts with SSH1. Interacts with RLIM and RNF6. Interacts (via LIM zinc-binding domains) with FAM89B/LRAP25 (via LRR repeat). Forms a tripartite complex with CDC42BPA, CDC42BPB and FAM89B/LRAP25. Post-translationally, autophosphorylated. Phosphorylated on Thr-508 by ROCK1 and PAK1, resulting in activation. Phosphorylated by PAK4 which increases the ability of LIMK1 to phosphorylate cofilin. Phosphorylated at Ser-323 by MAPKAPK2 during activation of VEGFA-induced signaling, which results in activation of LIMK1 and promotion of actin reorganization, cell migration, and tubule formation of endothelial cells. Dephosphorylated and inactivated by SSH1. Phosphorylated by CDC42BP. In terms of processing, ubiquitinated. 'Lys-48'-linked polyubiquitination by RNF6 leads to proteasomal degradation through the 26S proteasome, modulating LIMK1 levels in the growth cone and its effect on axonal outgrowth. Also polyubiquitinated by RLIM. In terms of tissue distribution, highest expression in the nervous system, particularly in the spinal cord and the cranial nerve and dorsal root ganglia.

It localises to the cytoplasm. The protein localises to the nucleus. It is found in the cytoskeleton. Its subcellular location is the cell projection. The protein resides in the lamellipodium. It carries out the reaction L-seryl-[protein] + ATP = O-phospho-L-seryl-[protein] + ADP + H(+). The enzyme catalyses L-threonyl-[protein] + ATP = O-phospho-L-threonyl-[protein] + ADP + H(+). Its function is as follows. Serine/threonine-protein kinase that plays an essential role in the regulation of actin filament dynamics. Acts downstream of several Rho family GTPase signal transduction pathways. Activated by upstream kinases including ROCK1, PAK1 and PAK4, which phosphorylate LIMK1 on a threonine residue located in its activation loop. LIMK1 subsequently phosphorylates and inactivates the actin binding/depolymerizing factors cofilin-1/CFL1, cofilin-2/CFL2 and destrin/DSTN, thereby preventing the cleavage of filamentous actin (F-actin), and stabilizing the actin cytoskeleton. In this way LIMK1 regulates several actin-dependent biological processes including cell motility, cell cycle progression, and differentiation. Phosphorylates TPPP on serine residues, thereby promoting microtubule disassembly. Stimulates axonal outgrowth and may be involved in brain development. This chain is LIM domain kinase 1 (Limk1), found in Mus musculus (Mouse).